Consider the following 1335-residue polypeptide: Protein SPATA31F1 (1335 aa).

The helical transmembrane segment at 8-28 (LWEVGYPLYIYGSIFIVIVII) threads the bilayer. Disordered stretches follow at residues 403-424 (ALKA…SGSD), 480-502 (LPKT…MSPS), 972-1002 (VQQN…SGDM), 1019-1141 (PSLE…LQDS), and 1248-1335 (ENVA…GHPT). Over residues 414-424 (SGGQDNDSGSD) the composition is skewed to polar residues. Over residues 972–1000 (VQQNQKQSNSKAVPQGSAHSVSKISQPSG) the composition is skewed to polar residues. 3 stretches are compositionally biased toward basic and acidic residues: residues 1047-1064 (NRED…REGD), 1071-1083 (STRE…EDQR), and 1129-1139 (PGEKESEKDLQ).

Belongs to the SPATA31 family.

Its subcellular location is the membrane. This Homo sapiens (Human) protein is Protein SPATA31F1.